A 137-amino-acid chain; its full sequence is Cytochrome c-type biogenesis protein CcmE (137 aa).

The Cytoplasmic segment spans residues M1 to R8. Residues L9–N29 traverse the membrane as a helical; Signal-anchor for type II membrane protein segment. At L30 to I137 the chain is on the periplasmic side. Heme-binding residues include H120 and Y124.

Belongs to the CcmE/CycJ family.

It is found in the cell inner membrane. Functionally, heme chaperone required for the biogenesis of c-type cytochromes. Transiently binds heme delivered by CcmC and transfers the heme to apo-cytochromes in a process facilitated by CcmF and CcmH. The sequence is that of Cytochrome c-type biogenesis protein CcmE from Rickettsia bellii (strain OSU 85-389).